A 211-amino-acid polypeptide reads, in one-letter code: MKKITRIGIGGPVGSGKTAIIEAITPLMLDLGIKVLIITNDVVTTEDARHVQRTLKGVLVEEKIIGVETGACPHTAVREDPSMNLAAVEDMESRFPDTDVVLIESGGDNLTLTFSPALVDFFIYVIDVAAGDKIPRKNGPGISQSDILVINKTDLAPYVGASLEVMDRDSKFMRGDKPFIFTNCKTGEGIPELVHLIHDMALFDVPIKEAS.

A GTP-binding site is contributed by 11-18; sequence GPVGSGKT.

The protein belongs to the SIMIBI class G3E GTPase family. UreG subfamily. In terms of assembly, homodimer. UreD, UreF and UreG form a complex that acts as a GTP-hydrolysis-dependent molecular chaperone, activating the urease apoprotein by helping to assemble the nickel containing metallocenter of UreC. The UreE protein probably delivers the nickel.

The protein localises to the cytoplasm. Its function is as follows. Facilitates the functional incorporation of the urease nickel metallocenter. This process requires GTP hydrolysis, probably effectuated by UreG. This Laribacter hongkongensis (strain HLHK9) protein is Urease accessory protein UreG.